We begin with the raw amino-acid sequence, 222 residues long: Putative auxin response factor 23 (222 aa).

Positions 126 to 222 (FTKVLTASDT…ETGELRVGIR (97 aa)) form a DNA-binding region, TF-B3.

Belongs to the ARF family. Homo and heterodimers.

It localises to the nucleus. Its function is as follows. Auxin response factors (ARFs) are transcriptional factors that binds specifically to the DNA sequence 5'-TGTCTC-3' found in the auxin-responsive promoter elements (AuxREs). Could act as transcriptional activator or repressor. Formation of heterodimers with Aux/IAA proteins may alter their ability to modulate early auxin response genes expression. The protein is Putative auxin response factor 23 (ARF23) of Arabidopsis thaliana (Mouse-ear cress).